The sequence spans 533 residues: MFCNQCEQTAKGQGCTVKGVCGKTDEVSAIQDLLVQVLVELGTVATAARKEGIAVSNEVNRLTAEGVFSTLTNVNFDDERFVPVIKNVAAARDELAAKVSADCGKLTKVAGTAAELSKQGEAFPVTSFDENEDLRSLKQILVYGLKGVAAYTDHAAILGQEDDELYAQIHEALSVVPQQLGMEELVGWAMKCGEMNLKAMELLDAGNTGAYGHPVPTEVPLGAKAGKAILVSGHDLKDLRQLLEQTEGTGINIYTHGEMLPCHGYPELKKFDHFYGHYGTAWQNQAKEFAQFPGAILMTTNCIQKPVESYKGNIYTTGLVGWPGVTHVTNGDFAEVIAKAQELPGFEADTDNGKVLCGFARNTVLGVADKVIEGVKAGAIKHFFLVGGCDGAKPGRNYYTDFVEQAPQDTVILTLACGKFRFFDKQLGDIGGIPRLLDIGQCNDAYSAIQIAVALANAFECGVNDLPLSMVLSWYEQKAVSILLTLLHLGIKDIRLGPSLPAFVTPNVLNFLVENFNIMPISTPEEDLKAILG.

[4Fe-4S] cluster-binding residues include Cys-3, Cys-6, Cys-15, and Cys-21. Residues His-234, Glu-258, Cys-302, Cys-389, Cys-417, Cys-442, Glu-476, and Lys-478 each contribute to the hybrid [4Fe-2O-2S] cluster site. Cys-389 is subject to Cysteine persulfide.

It belongs to the HCP family. [4Fe-4S] cluster serves as cofactor. It depends on hybrid [4Fe-2O-2S] cluster as a cofactor.

It is found in the cytoplasm. It catalyses the reaction A + NH4(+) + H2O = hydroxylamine + AH2 + H(+). In terms of biological role, catalyzes the reduction of hydroxylamine to form NH(3) and H(2)O. The polypeptide is Hydroxylamine reductase (Maridesulfovibrio salexigens (strain ATCC 14822 / DSM 2638 / NCIMB 8403 / VKM B-1763) (Desulfovibrio salexigens)).